Consider the following 92-residue polypeptide: Small ribosomal subunit protein uS19 (92 aa).

The protein belongs to the universal ribosomal protein uS19 family.

Its function is as follows. Protein S19 forms a complex with S13 that binds strongly to the 16S ribosomal RNA. This chain is Small ribosomal subunit protein uS19, found in Acholeplasma laidlawii (strain PG-8A).